The chain runs to 166 residues: Disulfide bond formation protein B (166 aa).

Over 1–10 (MGLNITNRQG) the chain is Cytoplasmic. A helical membrane pass occupies residues 11–27 (FLLVAAACAGAIGFALF). The Periplasmic segment spans residues 28 to 45 (AQYQLGEEPCPLCILQRI). A disulfide bond links C37 and C40. The helical transmembrane segment at 46-62 (GVMAVGALALLAALHNP) threads the bilayer. Topologically, residues 63-69 (GKTGAKV) are cytoplasmic. The helical transmembrane segment at 70 to 86 (WGGLMTLAALSGAGVSL) threads the bilayer. Residues 87 to 143 (RQLWLQSLPADQVPQCGPGLEFLMESFPLWEVLSKVLKGSGECAAIQGRFLGMTMPF) are Periplasmic-facing. Residues C102 and C129 are joined by a disulfide bond. The chain crosses the membrane as a helical span at residues 144–162 (WVAVFFAGVIVWTLWLVGR). Topologically, residues 163–166 (RRRG) are cytoplasmic.

Belongs to the DsbB family.

It is found in the cell inner membrane. In terms of biological role, required for disulfide bond formation in some periplasmic proteins. Acts by oxidizing the DsbA protein. The protein is Disulfide bond formation protein B of Chromobacterium violaceum (strain ATCC 12472 / DSM 30191 / JCM 1249 / CCUG 213 / NBRC 12614 / NCIMB 9131 / NCTC 9757 / MK).